The following is a 587-amino-acid chain: Bifunctional dihydrofolate reductase-thymidylate synthase (587 aa).

One can recognise a DHFR domain in the interval 9–237; that stretch reads DIYAICACCK…TTLDFIIYSK (229 aa). 36-42 is an NADP(+) binding site; that stretch reads GIGNAGV. Asp-51 contributes to the substrate binding site. NADP(+) is bound by residues 108–110 and 129–132; these read KKS and LSRT. Substrate-binding residues include Ile-173, Tyr-179, and Thr-194. 174–181 contributes to the NADP(+) binding site; it reads GGSSVYKE. The thymidylate synthase stretch occupies residues 301–587; it reads NHPEYQYLNI…HDKINMDMAA (287 aa). Arg-324 provides a ligand contact to dUMP. Cys-469 is an active-site residue. DUMP is bound by residues His-470, 488 to 492, Asn-500, and 530 to 532; these read QRSCD and HVY.

It in the N-terminal section; belongs to the dihydrofolate reductase family. In the C-terminal section; belongs to the thymidylate synthase family. In terms of assembly, homodimer.

It catalyses the reaction (6S)-5,6,7,8-tetrahydrofolate + NADP(+) = 7,8-dihydrofolate + NADPH + H(+). The catalysed reaction is dUMP + (6R)-5,10-methylene-5,6,7,8-tetrahydrofolate = 7,8-dihydrofolate + dTMP. It functions in the pathway cofactor biosynthesis; tetrahydrofolate biosynthesis; 5,6,7,8-tetrahydrofolate from 7,8-dihydrofolate: step 1/1. Functionally, bifunctional enzyme. Involved in de novo dTMP biosynthesis. Key enzyme in folate metabolism. Catalyzes an essential reaction for de novo glycine and purine synthesis, DNA precursor synthesis, and for the conversion of dUMP to dTMP. In Plasmodium berghei (strain Anka), this protein is Bifunctional dihydrofolate reductase-thymidylate synthase.